The primary structure comprises 229 residues: Large ribosomal subunit protein uL1 (229 aa).

Belongs to the universal ribosomal protein uL1 family. Part of the 50S ribosomal subunit.

Functionally, binds directly to 23S rRNA. The L1 stalk is quite mobile in the ribosome, and is involved in E site tRNA release. Its function is as follows. Protein L1 is also a translational repressor protein, it controls the translation of the L11 operon by binding to its mRNA. The protein is Large ribosomal subunit protein uL1 of Ureaplasma parvum serovar 3 (strain ATCC 27815 / 27 / NCTC 11736).